We begin with the raw amino-acid sequence, 230 residues long: Cytochrome c oxidase subunit 2 (230 aa).

Topologically, residues 1–14 (MAHPSQLGFQDAAS) are mitochondrial intermembrane. The chain crosses the membrane as a helical span at residues 15 to 45 (PVMEELIHFHDHTLMIVFLISTLVLYIITAM). At 46 to 59 (VSTKLTNKYILDSQ) the chain is on the mitochondrial matrix side. The helical transmembrane segment at 60–87 (EIEIVWTILPAIILIMIALPSLRILYLM) threads the bilayer. Over 88 to 230 (DEINDPHLTI…TWSSLMLEEA (143 aa)) the chain is Mitochondrial intermembrane. 6 residues coordinate Cu cation: His-161, Cys-196, Glu-198, Cys-200, His-204, and Met-207. Residue Glu-198 participates in Mg(2+) binding.

This sequence belongs to the cytochrome c oxidase subunit 2 family. In terms of assembly, component of the cytochrome c oxidase (complex IV, CIV), a multisubunit enzyme composed of 14 subunits. The complex is composed of a catalytic core of 3 subunits MT-CO1, MT-CO2 and MT-CO3, encoded in the mitochondrial DNA, and 11 supernumerary subunits COX4I, COX5A, COX5B, COX6A, COX6B, COX6C, COX7A, COX7B, COX7C, COX8 and NDUFA4, which are encoded in the nuclear genome. The complex exists as a monomer or a dimer and forms supercomplexes (SCs) in the inner mitochondrial membrane with NADH-ubiquinone oxidoreductase (complex I, CI) and ubiquinol-cytochrome c oxidoreductase (cytochrome b-c1 complex, complex III, CIII), resulting in different assemblies (supercomplex SCI(1)III(2)IV(1) and megacomplex MCI(2)III(2)IV(2)). Found in a complex with TMEM177, COA6, COX18, COX20, SCO1 and SCO2. Interacts with TMEM177 in a COX20-dependent manner. Interacts with COX20. Interacts with COX16. Requires Cu cation as cofactor.

The protein resides in the mitochondrion inner membrane. The enzyme catalyses 4 Fe(II)-[cytochrome c] + O2 + 8 H(+)(in) = 4 Fe(III)-[cytochrome c] + 2 H2O + 4 H(+)(out). Component of the cytochrome c oxidase, the last enzyme in the mitochondrial electron transport chain which drives oxidative phosphorylation. The respiratory chain contains 3 multisubunit complexes succinate dehydrogenase (complex II, CII), ubiquinol-cytochrome c oxidoreductase (cytochrome b-c1 complex, complex III, CIII) and cytochrome c oxidase (complex IV, CIV), that cooperate to transfer electrons derived from NADH and succinate to molecular oxygen, creating an electrochemical gradient over the inner membrane that drives transmembrane transport and the ATP synthase. Cytochrome c oxidase is the component of the respiratory chain that catalyzes the reduction of oxygen to water. Electrons originating from reduced cytochrome c in the intermembrane space (IMS) are transferred via the dinuclear copper A center (CU(A)) of subunit 2 and heme A of subunit 1 to the active site in subunit 1, a binuclear center (BNC) formed by heme A3 and copper B (CU(B)). The BNC reduces molecular oxygen to 2 water molecules using 4 electrons from cytochrome c in the IMS and 4 protons from the mitochondrial matrix. In Scyliorhinus canicula (Small-spotted catshark), this protein is Cytochrome c oxidase subunit 2 (MT-CO2).